The chain runs to 354 residues: 3-isopropylmalate dehydrogenase (354 aa).

76 to 87 serves as a coordination point for NAD(+); the sequence is GPRWDSAKERPE. Positions 94, 104, 130, and 215 each coordinate substrate. Mg(2+)-binding residues include D215, D239, and D243. 273–285 is an NAD(+) binding site; that stretch reads GSAPDIAGKNKAN.

This sequence belongs to the isocitrate and isopropylmalate dehydrogenases family. LeuB type 1 subfamily. In terms of assembly, homodimer. Requires Mg(2+) as cofactor. Mn(2+) is required as a cofactor.

Its subcellular location is the cytoplasm. It carries out the reaction (2R,3S)-3-isopropylmalate + NAD(+) = 4-methyl-2-oxopentanoate + CO2 + NADH. It functions in the pathway amino-acid biosynthesis; L-leucine biosynthesis; L-leucine from 3-methyl-2-oxobutanoate: step 3/4. Catalyzes the oxidation of 3-carboxy-2-hydroxy-4-methylpentanoate (3-isopropylmalate) to 3-carboxy-4-methyl-2-oxopentanoate. The product decarboxylates to 4-methyl-2 oxopentanoate. In Bacillus cereus (strain ATCC 10987 / NRS 248), this protein is 3-isopropylmalate dehydrogenase.